A 189-amino-acid chain; its full sequence is uncharacterized protein (189 aa).

4 helical membrane-spanning segments follow: residues 35–55 (IIWY…AVMK), 97–117 (GVLQ…ALHF), 123–143 (WLLF…YEWT), and 144–164 (GNLF…ACQI).

It localises to the cell membrane. This is an uncharacterized protein from Bacillus subtilis (strain 168).